The sequence spans 273 residues: Undecaprenyl-diphosphatase (273 aa).

The next 7 helical transmembrane spans lie at 6–26 (SLLI…LPVS), 45–65 (AKTF…VMFW), 90–110 (LTLI…LLFH), 116–136 (LFNP…LIAA), 190–210 (YAAS…ATAL), 222–242 (GDIP…LIAI), and 252–272 (ISFI…YVVF).

Belongs to the UppP family.

It localises to the cell inner membrane. It carries out the reaction di-trans,octa-cis-undecaprenyl diphosphate + H2O = di-trans,octa-cis-undecaprenyl phosphate + phosphate + H(+). Its function is as follows. Catalyzes the dephosphorylation of undecaprenyl diphosphate (UPP). Confers resistance to bacitracin. This is Undecaprenyl-diphosphatase from Escherichia coli O7:K1 (strain IAI39 / ExPEC).